A 635-amino-acid chain; its full sequence is ATP-dependent zinc metalloprotease FtsH (635 aa).

Residues 1–6 (MNNQGR) are Cytoplasmic-facing. Residues 7 to 27 (SILTWAALFVFVILLFNVFQS) form a helical membrane-spanning segment. The Periplasmic portion of the chain corresponds to 28–103 (DGLLGGRNNI…VVPLETRMNT (76 aa)). A helical membrane pass occupies residues 104–124 (FLGFLISWFPMLLLIGVWVFF). The Cytoplasmic portion of the chain corresponds to 125–635 (MRQMHGGGKA…KKAKKESTNI (511 aa)). 195 to 202 (GPPGTGKT) lines the ATP pocket. His-417 is a Zn(2+) binding site. Residue Glu-418 is part of the active site. Zn(2+) is bound by residues His-421 and Asp-495. A disordered region spans residues 600-635 (SEEENKFPFNDSPTIKIDKEKSPEKAKKAKKESTNI). A compositionally biased stretch (basic and acidic residues) spans 615–635 (KIDKEKSPEKAKKAKKESTNI).

The protein in the central section; belongs to the AAA ATPase family. This sequence in the C-terminal section; belongs to the peptidase M41 family. As to quaternary structure, homohexamer. Zn(2+) is required as a cofactor.

The protein resides in the cell inner membrane. In terms of biological role, acts as a processive, ATP-dependent zinc metallopeptidase for both cytoplasmic and membrane proteins. Plays a role in the quality control of integral membrane proteins. This Rickettsia felis (strain ATCC VR-1525 / URRWXCal2) (Rickettsia azadi) protein is ATP-dependent zinc metalloprotease FtsH.